The sequence spans 120 residues: NAD(P)H-quinone oxidoreductase subunit 3, chloroplastic (120 aa).

Helical transmembrane passes span 10–30 (FWFFLIIGAIIPTLAFTTSKL), 64–84 (MFALVFVIFDVETIFLYPWAM), and 89–109 (LGVYGFIEALIFVLILVIGLV).

The protein belongs to the complex I subunit 3 family. As to quaternary structure, NDH is composed of at least 16 different subunits, 5 of which are encoded in the nucleus.

The protein localises to the plastid. Its subcellular location is the chloroplast thylakoid membrane. It carries out the reaction a plastoquinone + NADH + (n+1) H(+)(in) = a plastoquinol + NAD(+) + n H(+)(out). It catalyses the reaction a plastoquinone + NADPH + (n+1) H(+)(in) = a plastoquinol + NADP(+) + n H(+)(out). Its function is as follows. NDH shuttles electrons from NAD(P)H:plastoquinone, via FMN and iron-sulfur (Fe-S) centers, to quinones in the photosynthetic chain and possibly in a chloroplast respiratory chain. The immediate electron acceptor for the enzyme in this species is believed to be plastoquinone. Couples the redox reaction to proton translocation, and thus conserves the redox energy in a proton gradient. This is NAD(P)H-quinone oxidoreductase subunit 3, chloroplastic from Chaetosphaeridium globosum (Charophycean green alga).